Consider the following 60-residue polypeptide: Large ribosomal subunit protein bL32 (60 aa).

The interval Met-1–Ser-43 is disordered.

Belongs to the bacterial ribosomal protein bL32 family.

The chain is Large ribosomal subunit protein bL32 from Nitrosomonas europaea (strain ATCC 19718 / CIP 103999 / KCTC 2705 / NBRC 14298).